The primary structure comprises 638 residues: 9-cis-epoxycarotenoid dioxygenase NCED1, chloroplastic (638 aa).

Residues 1–80 constitute a chloroplast transit peptide; sequence MQRICPAHCS…QTEQEDEQLV (80 aa). Composition is skewed to low complexity over residues 28 to 37, 44 to 69, and 92 to 102; these read AASAAPQSPS, ASAA…TRTP, and TTNGRAAPSQS. Disordered regions lie at residues 28 to 80 and 92 to 113; these read AASA…EQLV and TTNG…PAAA. Fe cation contacts are provided by histidine 331, histidine 380, histidine 446, and histidine 624.

Belongs to the carotenoid oxygenase family. Fe(2+) serves as cofactor.

Its subcellular location is the plastid. It is found in the chloroplast. It carries out the reaction a 9-cis-epoxycarotenoid + O2 = a 12'-apo-carotenal + 2-cis,4-trans-xanthoxin. The catalysed reaction is 9-cis-violaxanthin + O2 = (3S,5R,6S)-5,6-epoxy-3-hydroxy-5,6-dihydro-12'-apo-beta-caroten-12'-al + 2-cis,4-trans-xanthoxin. The enzyme catalyses 9'-cis-neoxanthin + O2 = (3S,5R,6R)-3,5-dihydroxy-6,7-didehydro-5,6-dihydro-12'-apo-beta-caroten-12'-al + 2-cis,4-trans-xanthoxin. Functionally, has a 11,12(11',12') 9-cis epoxycarotenoid cleavage activity. Catalyzes the first step of abscisic-acid biosynthesis from carotenoids. The chain is 9-cis-epoxycarotenoid dioxygenase NCED1, chloroplastic from Oryza sativa subsp. japonica (Rice).